A 335-amino-acid chain; its full sequence is Nonaprenyl diphosphate synthase (335 aa).

K57, R60, and H90 together coordinate isopentenyl diphosphate. Residues D97 and D101 each coordinate Mg(2+). Positions 97–101 (DDVMD) match the DDXXD motif motif. R107 contributes to the isopentenyl diphosphate binding site. The DDXXD motif signature appears at 223–227 (DDIID).

The protein belongs to the FPP/GGPP synthase family. The cofactor is Mg(2+).

The enzyme catalyses isopentenyl diphosphate + (2E)-geranyl diphosphate = (2E,6E)-farnesyl diphosphate + diphosphate. It catalyses the reaction isopentenyl diphosphate + (2E,6E)-farnesyl diphosphate = (2E,6E,10E)-geranylgeranyl diphosphate + diphosphate. It carries out the reaction 5 isopentenyl diphosphate + (2E,6E,10E)-geranylgeranyl diphosphate = all-trans-nonaprenyl diphosphate + 5 diphosphate. It functions in the pathway isoprenoid biosynthesis; farnesyl diphosphate biosynthesis; farnesyl diphosphate from geranyl diphosphate and isopentenyl diphosphate. Its pathway is isoprenoid biosynthesis; geranylgeranyl diphosphate biosynthesis; geranylgeranyl diphosphate from farnesyl diphosphate and isopentenyl diphosphate: step 1/1. Functionally, catalyzes the sequential condensations of isopentenyl pyrophosphate (IPP) with geranyl diphosphate (GPP) to yield (2E,6E)-farnesyl diphosphate (E,E-FPP), with E,E-FPP to yield geranylgeranyl diphosphate (GGPP) and with GGPP to yield nonaprenyl diphosphate. May also have weak activity with dimethylallyl diphosphate (DMAPP). The polypeptide is Nonaprenyl diphosphate synthase (Mycobacterium tuberculosis (strain ATCC 25618 / H37Rv)).